A 545-amino-acid polypeptide reads, in one-letter code: ATP synthase subunit alpha (545 aa).

An ATP-binding site is contributed by Gly-173–Ser-180.

It belongs to the ATPase alpha/beta chains family. In terms of assembly, F-type ATPases have 2 components, CF(1) - the catalytic core - and CF(0) - the membrane proton channel. CF(1) has five subunits: alpha(3), beta(3), gamma(1), delta(1), epsilon(1). CF(0) has three main subunits: a(1), b(2) and c(9-12). The alpha and beta chains form an alternating ring which encloses part of the gamma chain. CF(1) is attached to CF(0) by a central stalk formed by the gamma and epsilon chains, while a peripheral stalk is formed by the delta and b chains.

It localises to the cell membrane. It carries out the reaction ATP + H2O + 4 H(+)(in) = ADP + phosphate + 5 H(+)(out). Functionally, produces ATP from ADP in the presence of a proton gradient across the membrane. The alpha chain is a regulatory subunit. In Arthrobacter sp. (strain FB24), this protein is ATP synthase subunit alpha.